A 323-amino-acid polypeptide reads, in one-letter code: Aquaporin-2 (323 aa).

The next 3 helical transmembrane spans lie at Phe-32–Arg-54, Tyr-74–Gly-96, and Cys-103–Ala-123. The NPA 1 signature appears at Asn-85 to Ala-87. A glycan (N-linked (GlcNAc...) asparagine) is linked at Asn-143. 2 helical membrane passes run Gly-161–Val-181 and Phe-193–Gly-213. An NPA 2 motif is present at residues Asn-217–Ser-219. A helical transmembrane segment spans residues Tyr-243–Ile-263. An N-linked (GlcNAc...) asparagine glycan is attached at Asn-292.

Belongs to the MIP/aquaporin (TC 1.A.8) family.

Its subcellular location is the cell membrane. The enzyme catalyses H2O(in) = H2O(out). It carries out the reaction glycerol(in) = glycerol(out). Its function is as follows. Aquaglyceroporin that may modulate the water content and osmolytes during anhydrobiosis. The chain is Aquaporin-2 from Milnesium tardigradum (Water bear).